Here is a 396-residue protein sequence, read N- to C-terminus: 1-deoxy-D-xylulose 5-phosphate reductoisomerase (396 aa).

NADPH-binding residues include Thr-13, Gly-14, Ser-15, Ile-16, and Asn-127. Lys-128 provides a ligand contact to 1-deoxy-D-xylulose 5-phosphate. Glu-129 is an NADPH binding site. Asp-153 is a Mn(2+) binding site. Residues Ser-154, Glu-155, Ser-184, and His-207 each coordinate 1-deoxy-D-xylulose 5-phosphate. Glu-155 is a binding site for Mn(2+). Gly-213 is an NADPH binding site. 1-deoxy-D-xylulose 5-phosphate contacts are provided by Ser-220, Asn-225, Lys-226, and Glu-229. Glu-229 is a Mn(2+) binding site.

Belongs to the DXR family. The cofactor is Mg(2+). Requires Mn(2+) as cofactor.

It catalyses the reaction 2-C-methyl-D-erythritol 4-phosphate + NADP(+) = 1-deoxy-D-xylulose 5-phosphate + NADPH + H(+). The protein operates within isoprenoid biosynthesis; isopentenyl diphosphate biosynthesis via DXP pathway; isopentenyl diphosphate from 1-deoxy-D-xylulose 5-phosphate: step 1/6. Its function is as follows. Catalyzes the NADPH-dependent rearrangement and reduction of 1-deoxy-D-xylulose-5-phosphate (DXP) to 2-C-methyl-D-erythritol 4-phosphate (MEP). The polypeptide is 1-deoxy-D-xylulose 5-phosphate reductoisomerase (Pseudomonas syringae pv. syringae (strain B728a)).